Consider the following 626-residue polypeptide: Chaperone protein HtpG (626 aa).

The interval 1 to 331 is a; substrate-binding; that stretch reads MSETVERHEF…TDDLPLNVSR (331 aa). Residues 332–544 are b; that stretch reads EMLQSTPTLQ…GMGPDLQMQR (213 aa). Positions 545–626 are c; sequence LLRRAGRGFG…GTVAKPAESA (82 aa).

Belongs to the heat shock protein 90 family. As to quaternary structure, homodimer.

The protein resides in the cytoplasm. In terms of biological role, molecular chaperone. Has ATPase activity. The polypeptide is Chaperone protein HtpG (Methylorubrum populi (strain ATCC BAA-705 / NCIMB 13946 / BJ001) (Methylobacterium populi)).